The primary structure comprises 548 residues: Chaperonin GroEL (548 aa).

ATP contacts are provided by residues 30-33 (TLGP), Lys-51, 87-91 (DGTTT), Gly-415, 479-481 (NAA), and Asp-495.

This sequence belongs to the chaperonin (HSP60) family. In terms of assembly, forms a cylinder of 14 subunits composed of two heptameric rings stacked back-to-back. Interacts with the co-chaperonin GroES.

The protein localises to the cytoplasm. It catalyses the reaction ATP + H2O + a folded polypeptide = ADP + phosphate + an unfolded polypeptide.. Its function is as follows. Together with its co-chaperonin GroES, plays an essential role in assisting protein folding. The GroEL-GroES system forms a nano-cage that allows encapsulation of the non-native substrate proteins and provides a physical environment optimized to promote and accelerate protein folding. The sequence is that of Chaperonin GroEL from Pseudomonas fluorescens (strain Pf0-1).